We begin with the raw amino-acid sequence, 314 residues long: Olfactory receptor 8D4 (314 aa).

Over 1 to 25 the chain is Extracellular; that stretch reads MGVKNHSTVTEFLLSGLTEQAELQL. Asn-5 is a glycosylation site (N-linked (GlcNAc...) asparagine). Residues 26 to 46 traverse the membrane as a helical segment; sequence PLFCLFLGIYTVTVVGNLSMI. Topologically, residues 47 to 54 are cytoplasmic; it reads SIIRLNRQ. A helical transmembrane segment spans residues 55-75; that stretch reads LHTPMYYFLSSLSFLDFCYSS. The Extracellular portion of the chain corresponds to 76–99; sequence VITPKMLSGFLCRDRSISYSGCMI. Residues Cys-97 and Cys-189 are joined by a disulfide bond. Residues 100–120 form a helical membrane-spanning segment; sequence QLFFFCVCVISECYMLAAMAC. Over 121–139 the chain is Cytoplasmic; it reads DRYVAICSPLLYRVIMSPR. Residues 140–160 form a helical membrane-spanning segment; that stretch reads VCSLLVAAVFSVGFTDAVIHG. The Extracellular portion of the chain corresponds to 161–197; sequence GCILRLSFCGSNIIKHYFCDIVPLIKLSCSSTYIDEL. The helical transmembrane segment at 198 to 217 threads the bilayer; the sequence is LIFVIGGFNMVATSLTIIIS. The Cytoplasmic portion of the chain corresponds to 218-237; that stretch reads YAFILTSILRIHSKKGRCKA. A helical membrane pass occupies residues 238–258; sequence FSTCSSHLTAVLMFYGSLMSM. Topologically, residues 259 to 271 are extracellular; the sequence is YLKPASSSSLTQE. The helical transmembrane segment at 272-292 threads the bilayer; the sequence is KVSSVFYTTVILMLNPLIYSL. Topologically, residues 293–314 are cytoplasmic; the sequence is RNNEVRNALMKLLRRKISLSPG.

Belongs to the G-protein coupled receptor 1 family.

The protein resides in the cell membrane. Its function is as follows. Odorant receptor. The protein is Olfactory receptor 8D4 (OR8D4) of Homo sapiens (Human).